The sequence spans 200 residues: GTP-binding protein ypt2 (200 aa).

16–23 provides a ligand contact to GTP; it reads GDSGVGKS. The short motif at 38–46 is the Effector region element; that stretch reads FITTIGIDF. GTP-binding positions include 64-68 and 122-125; these read DTAGQ and NKCD. 2 S-geranylgeranyl cysteine lipidation sites follow: Cys199 and Cys200.

This sequence belongs to the small GTPase superfamily. Rab family.

The protein resides in the cell membrane. Protein transport. Probably involved in vesicular traffic. This chain is GTP-binding protein ypt2 (ypt2), found in Schizosaccharomyces pombe (strain 972 / ATCC 24843) (Fission yeast).